The primary structure comprises 107 residues: Ig kappa chain V-VI region NQ2-17.4.1 (107 aa).

Residues 1–23 (QIVLTQSPAIMSASPGQKVTMTC) form a framework-1 region. Residues C23 and C87 are joined by a disulfide bond. Positions 24 to 33 (SASSSVSYMH) are complementarity-determining-1. A framework-2 region spans residues 34 to 48 (WYQQKSGTSPKRWIY). The interval 49 to 55 (DTSKLAS) is complementarity-determining-2. Positions 56–87 (GVPARFSGSGSATSYSLTITSMQAEDAATYYC) are framework-3. Residues 88-96 (QQWSSNPLT) are complementarity-determining-3. Residues 97 to 106 (FGAGTKLELK) are framework-4.

Anti-2-phenyl oxazolone (PHOX) Antibody. The polypeptide is Ig kappa chain V-VI region NQ2-17.4.1 (Mus musculus (Mouse)).